The sequence spans 128 residues: MRHRKSGRHLSRTSSHRKAMFQNMAVSLFEHELIKTTLPKAKELRRVAEPLITLAKEDSVANRRLAFDRTRSKEIVGKLFNDLGKRYATRQGGYLRILKCGFRTGDNAPMAYVELVDRPVGGSVEAAE.

It belongs to the bacterial ribosomal protein bL17 family. In terms of assembly, part of the 50S ribosomal subunit. Contacts protein L32.

This is Large ribosomal subunit protein bL17 from Pseudomonas syringae pv. tomato (strain ATCC BAA-871 / DC3000).